Here is a 158-residue protein sequence, read N- to C-terminus: C-type lectin BfL-1 (158 aa).

A signal peptide spans 1 to 21; the sequence is MGHFTFIGLCLLAMFLSLSGA. 4 cysteine pairs are disulfide-bonded: Cys-26–Cys-37, Cys-54–Cys-154, Cys-61–Cys-156, and Cys-129–Cys-146. Residues 33–155 enclose the C-type lectin domain; that stretch reads KNGLCYKVFS…CAALRPFLCQ (123 aa). 3 residues coordinate Ca(2+): Gln-119, Asp-121, and Glu-127. The short motif at 119–121 is the Galactose-binding element; it reads QPD. An N-linked (GlcNAc...) asparagine glycan is attached at Asn-134. 2 residues coordinate Ca(2+): Asn-142 and Asp-143.

This sequence belongs to the true venom lectin family. As to quaternary structure, homodimer; non-covalently linked. In terms of tissue distribution, expressed by the venom gland.

The protein resides in the secreted. Galactose-binding lectin which recognizes specific carbohydrate structures and agglutinates a variety of animal cells by binding to cell-surface glycoproteins and glycolipids. May be a calcium-dependent lectin. This chain is C-type lectin BfL-1, found in Bungarus fasciatus (Banded krait).